The chain runs to 128 residues: Large ribosomal subunit protein bL17 (128 aa).

It belongs to the bacterial ribosomal protein bL17 family. In terms of assembly, part of the 50S ribosomal subunit. Contacts protein L32.

The sequence is that of Large ribosomal subunit protein bL17 from Klebsiella pneumoniae (strain 342).